The following is a 258-amino-acid chain: Enterotoxin type G (258 aa).

The first 25 residues, 1–25 (MKKLSTVIIILILEIVFHNMNYVNA), serve as a signal peptide directing secretion. An intrachain disulfide couples C116 to C133.

It belongs to the staphylococcal/streptococcal toxin family.

The protein localises to the secreted. In terms of biological role, staphylococcal enterotoxins cause the intoxication staphylococcal food poisoning syndrome. The illness is characterized by high fever, hypotension, diarrhea, shock, and in some cases death. The polypeptide is Enterotoxin type G (entG) (Staphylococcus aureus (strain N315)).